A 523-amino-acid polypeptide reads, in one-letter code: 2-isopropylmalate synthase (523 aa).

The region spanning 5–267 (VIIFDTTLRD…HTNINHHEIW (263 aa)) is the Pyruvate carboxyltransferase domain. Residues Asp-14, His-202, His-204, and Asn-238 each coordinate Mn(2+). The interval 392–523 (RLDYFSVQSG…QNKENNKETV (132 aa)) is regulatory domain.

This sequence belongs to the alpha-IPM synthase/homocitrate synthase family. LeuA type 1 subfamily. Homodimer. Mn(2+) is required as a cofactor.

It is found in the cytoplasm. It catalyses the reaction 3-methyl-2-oxobutanoate + acetyl-CoA + H2O = (2S)-2-isopropylmalate + CoA + H(+). Its pathway is amino-acid biosynthesis; L-leucine biosynthesis; L-leucine from 3-methyl-2-oxobutanoate: step 1/4. Functionally, catalyzes the condensation of the acetyl group of acetyl-CoA with 3-methyl-2-oxobutanoate (2-ketoisovalerate) to form 3-carboxy-3-hydroxy-4-methylpentanoate (2-isopropylmalate). This chain is 2-isopropylmalate synthase, found in Salmonella typhi.